A 166-amino-acid chain; its full sequence is Testis-expressed protein 51 (166 aa).

Residues 1–15 form the signal peptide; that stretch reads MLPLLIICLLPAIEG. The helical transmembrane segment at 138 to 154 threads the bilayer; that stretch reads SLWAVSLSSALLLAIAG.

The protein resides in the membrane. The sequence is that of Testis-expressed protein 51 from Homo sapiens (Human).